A 286-amino-acid polypeptide reads, in one-letter code: Putative transcription factor kapC (286 aa).

The span at 1–10 (MQPALAPAPH) shows a compositional bias: pro residues. The interval 1 to 120 (MQPALAPAPH…QNRAAQRAFR (120 aa)) is disordered. A compositionally biased stretch (low complexity) spans 26 to 40 (HDQLLAAHQHLSHPQ). A compositionally biased stretch (pro residues) spans 41 to 54 (QPRPQAPATQPPHM). Positions 55-67 (QPNTASPRDQNNI) are enriched in polar residues. A compositionally biased stretch (pro residues) spans 81–92 (PQTPPQPEPAPQ). In terms of domain architecture, bZIP spans 102-165 (PLSTSKRAAQ…EYIINLQTRL (64 aa)). The interval 103–126 (LSTSKRAAQNRAAQRAFRQRKESY) is basic motif. The span at 108–118 (RAAQNRAAQRA) shows a compositional bias: low complexity. The segment at 130–161 (LEEQVKHQEAITEEYKALHAENYQLREYIINL) is leucine-zipper. Residues 197–286 (RGNAASAGPA…QEPDGLPVVS (90 aa)) form a disordered region. Over residues 198–222 (GNAASAGPAPAGPGPQQSQPNQNQG) the composition is skewed to low complexity.

Belongs to the bZIP family.

The protein resides in the nucleus. In terms of biological role, putative transcription factor. The sequence is that of Putative transcription factor kapC (kapC) from Aspergillus terreus (strain NIH 2624 / FGSC A1156).